Consider the following 303-residue polypeptide: Probable 5-dehydro-4-deoxyglucarate dehydratase (303 aa).

It belongs to the DapA family.

It carries out the reaction 5-dehydro-4-deoxy-D-glucarate + H(+) = 2,5-dioxopentanoate + CO2 + H2O. The protein operates within carbohydrate acid metabolism; D-glucarate degradation; 2,5-dioxopentanoate from D-glucarate: step 2/2. This Paracidovorax citrulli (strain AAC00-1) (Acidovorax citrulli) protein is Probable 5-dehydro-4-deoxyglucarate dehydratase.